The primary structure comprises 297 residues: NAD kinase (297 aa).

Asp74 functions as the Proton acceptor in the catalytic mechanism. NAD(+) contacts are provided by residues 74-75 (DG), Arg79, 148-149 (NE), Arg176, Asp178, 189-194 (TAYALS), and Gln248.

It belongs to the NAD kinase family. The cofactor is a divalent metal cation.

The protein resides in the cytoplasm. The catalysed reaction is NAD(+) + ATP = ADP + NADP(+) + H(+). Its function is as follows. Involved in the regulation of the intracellular balance of NAD and NADP, and is a key enzyme in the biosynthesis of NADP. Catalyzes specifically the phosphorylation on 2'-hydroxyl of the adenosine moiety of NAD to yield NADP. This Blochmanniella pennsylvanica (strain BPEN) protein is NAD kinase.